The following is a 220-amino-acid chain: Small ribosomal subunit protein eS1 (220 aa).

It belongs to the eukaryotic ribosomal protein eS1 family.

This chain is Small ribosomal subunit protein eS1, found in Methanococcus vannielii (strain ATCC 35089 / DSM 1224 / JCM 13029 / OCM 148 / SB).